The chain runs to 377 residues: Homoserine O-succinyltransferase (377 aa).

The 312-residue stretch at 45 to 356 (NAVLVCHALN…PHGHDAFLLD (312 aa)) folds into the AB hydrolase-1 domain. Serine 151 acts as the Nucleophile in catalysis. A substrate-binding site is contributed by arginine 221. Residues aspartate 317 and histidine 350 contribute to the active site. Aspartate 351 contributes to the substrate binding site.

Belongs to the AB hydrolase superfamily. MetX family. As to quaternary structure, homodimer.

Its subcellular location is the cytoplasm. It carries out the reaction L-homoserine + succinyl-CoA = O-succinyl-L-homoserine + CoA. It participates in amino-acid biosynthesis; L-methionine biosynthesis via de novo pathway; O-succinyl-L-homoserine from L-homoserine: step 1/1. In terms of biological role, transfers a succinyl group from succinyl-CoA to L-homoserine, forming succinyl-L-homoserine. The polypeptide is Homoserine O-succinyltransferase (Leptothrix cholodnii (strain ATCC 51168 / LMG 8142 / SP-6) (Leptothrix discophora (strain SP-6))).